The following is a 774-amino-acid chain: 5-methyltetrahydropteroyltriglutamate--homocysteine methyltransferase (774 aa).

5-methyltetrahydropteroyltri-L-glutamate is bound by residues 15–18 and K116; that span reads RELK. L-homocysteine is bound by residues 445–447 and E498; that span reads IGS. L-methionine contacts are provided by residues 445-447 and E498; that span reads IGS. 5-methyltetrahydropteroyltri-L-glutamate is bound by residues 529–530 and W575; that span reads RC. Residue D613 coordinates L-homocysteine. D613 lines the L-methionine pocket. E619 contacts 5-methyltetrahydropteroyltri-L-glutamate. 3 residues coordinate Zn(2+): H655, C657, and E679. The active-site Proton donor is the H708. Zn(2+) is bound at residue C740.

Belongs to the vitamin-B12 independent methionine synthase family. Requires Zn(2+) as cofactor.

It catalyses the reaction 5-methyltetrahydropteroyltri-L-glutamate + L-homocysteine = tetrahydropteroyltri-L-glutamate + L-methionine. The protein operates within amino-acid biosynthesis; L-methionine biosynthesis via de novo pathway; L-methionine from L-homocysteine (MetE route): step 1/1. Catalyzes the transfer of a methyl group from 5-methyltetrahydrofolate to homocysteine resulting in methionine formation. The sequence is that of 5-methyltetrahydropteroyltriglutamate--homocysteine methyltransferase from Flavobacterium johnsoniae (strain ATCC 17061 / DSM 2064 / JCM 8514 / BCRC 14874 / CCUG 350202 / NBRC 14942 / NCIMB 11054 / UW101) (Cytophaga johnsonae).